A 309-amino-acid polypeptide reads, in one-letter code: Prephenate dehydratase (309 aa).

Residues 3 to 191 (GIAYLGPEGT…ARTRFVLVGC (189 aa)) form the Prephenate dehydratase domain. The ACT domain occupies 205-282 (SVVLRLDNVP…ADVRYLGSWP (78 aa)).

Homodimer.

It carries out the reaction prephenate + H(+) = 3-phenylpyruvate + CO2 + H2O. The protein operates within amino-acid biosynthesis; L-phenylalanine biosynthesis; phenylpyruvate from prephenate: step 1/1. In Mycolicibacterium gilvum (strain PYR-GCK) (Mycobacterium gilvum (strain PYR-GCK)), this protein is Prephenate dehydratase (pheA).